The primary structure comprises 130 residues: Small ribosomal subunit protein uS11c (130 aa).

This sequence belongs to the universal ribosomal protein uS11 family. Part of the 30S ribosomal subunit.

It is found in the plastid. Its subcellular location is the chloroplast. This chain is Small ribosomal subunit protein uS11c, found in Psilotum nudum (Whisk fern).